The following is a 1353-amino-acid chain: Adenylate cyclase type 9 (1353 aa).

Disordered stretches follow at residues 1 to 27 (MASS…DSNS) and 51 to 73 (SSSC…GGRL). Residues 1–117 (MASSPHQQLL…CFPQTQRRFR (117 aa)) lie on the Cytoplasmic side of the membrane. Residues 16 to 27 (EVSCDSSGDSNS) show a composition bias toward polar residues. Low complexity predominate over residues 51–66 (SSSCSSSGDSGGLPRR). A helical transmembrane segment spans residues 118–138 (YALFYVGFACLLWSIYFAVHM). Residues 139-141 (KSK) are Extracellular-facing. A helical transmembrane segment spans residues 142–162 (VIVMVVPALCFLVVCVGFFLF). At 163–171 (TFTKLYARH) the chain is on the cytoplasmic side. A helical transmembrane segment spans residues 172–192 (YAWTSLALTLLVFALTLAAQF). Residues 193–215 (QVWTPLSGRVDSSNHTLTATPAD) are Extracellular-facing. Residue Asn206 is glycosylated (N-linked (GlcNAc...) asparagine). A helical transmembrane segment spans residues 216-235 (TCLSQVGSFSICIEVLLLLY). The Cytoplasmic portion of the chain corresponds to 236–241 (TVMQLP). A helical membrane pass occupies residues 242-259 (LYLSLFLGVVYSVLFETF). At 260–280 (GYHFRNEDCYPSPGPGALHWE) the chain is on the extracellular side. A helical transmembrane segment spans residues 281-301 (LLSRALLHVCIHAIGIHLFVM). The Cytoplasmic portion of the chain corresponds to 302–786 (SQVRSRSTFL…VKTFASATFS (485 aa)). The disordered stretch occupies residues 349–375 (QGDEESENSVKRHATSSPKNRKKKSSI). Over residues 359-374 (KRHATSSPKNRKKKSS) the composition is skewed to basic residues. Positions 399, 400, and 443 each coordinate Mg(2+). ATP-binding positions include 399–404 (DIVGFT), 441–443 (LGD), and Arg487. Disordered stretches follow at residues 596 to 615 (DSRE…GSVS) and 641 to 685 (SEAG…EEKL). Ser610 and Ser613 each carry phosphoserine. The span at 661-676 (STKASGGPNSKTQNGL) shows a compositional bias: polar residues. A phosphoserine mark is found at Ser688, Ser691, and Ser706. A helical membrane pass occupies residues 787-807 (SLLDVFLSTTVFLILSITCFL). Residues 808 to 818 (KYGATATPPPP) lie on the Extracellular side of the membrane. The chain crosses the membrane as a helical span at residues 819 to 839 (AALAVFGADLLLEVLSLIVSI). Over 840–867 (RMVFFLEDVMTCTKWLLEWIAGWLPRHC) the chain is Cytoplasmic. A helical membrane pass occupies residues 868-888 (IGAILVSLPALAVYSHITSEF). Topologically, residues 889–891 (ETN) are extracellular. The helical transmembrane segment at 892 to 912 (IHVTMFTGSAVLVAVVHYCNF) threads the bilayer. The Cytoplasmic segment spans residues 913–920 (CQLSSWMR). Residues 921-941 (SSLATIVGAGLLLLLHISLCQ) traverse the membrane as a helical segment. The Extracellular segment spans residues 942–975 (DSSIVMSPLDSAQNFSAQRNPCNSSVLQDGRRPA). N-linked (GlcNAc...) asparagine glycans are attached at residues Asn955 and Asn964. A helical membrane pass occupies residues 976 to 996 (SLIGKELILTFFLLLLLVWFL). The Cytoplasmic segment spans residues 997–1353 (NREFEVSYRL…LSKLNVSKSV (357 aa)). ATP is bound by residues Lys1108, 1185 to 1187 (DIW), 1192 to 1196 (NIASR), and Lys1232. Residues Ser1257, Ser1259, Ser1295, Ser1307, and Ser1332 each carry the phosphoserine modification. The disordered stretch occupies residues 1290–1314 (KASLGSDDSTQAKEARLSSKRSWRE). A compositionally biased stretch (basic and acidic residues) spans 1299–1314 (TQAKEARLSSKRSWRE).

This sequence belongs to the adenylyl cyclase class-4/guanylyl cyclase family. The cofactor is Mg(2+). Mn(2+) serves as cofactor. As to expression, detected in brain, spleen, lung, liver and testis (at protein level). Detected in brain, especially in hippocampus, cerebellum and neocortex. Found in decreasing order in skeletal muscle, heart, adrenal gland, ovary and brain; and to a lesser extent, in kidney, liver, testis, lung, thymus and spleen.

It is found in the cell membrane. The enzyme catalyses ATP = 3',5'-cyclic AMP + diphosphate. Insensitive to calcium/calmodulin, forskolin and somatostatin. Stimulated by beta-adrenergic receptor activation. Activity is down-regulated by calcium/calcineurin. Functionally, adenylyl cyclase that catalyzes the formation of the signaling molecule cAMP in response to activation of G protein-coupled receptors. Contributes to signaling cascades activated by CRH (corticotropin-releasing factor), corticosteroids and by beta-adrenergic receptors. This Mus musculus (Mouse) protein is Adenylate cyclase type 9 (Adcy9).